The chain runs to 100 residues: Small ribosomal subunit protein uS14 (100 aa).

Belongs to the universal ribosomal protein uS14 family. In terms of assembly, part of the 30S ribosomal subunit. Contacts proteins S3 and S10.

In terms of biological role, binds 16S rRNA, required for the assembly of 30S particles and may also be responsible for determining the conformation of the 16S rRNA at the A site. The chain is Small ribosomal subunit protein uS14 from Rippkaea orientalis (strain PCC 8801 / RF-1) (Cyanothece sp. (strain PCC 8801)).